The following is a 382-amino-acid chain: Chorismate synthase (382 aa).

Positions 39 and 45 each coordinate NADP(+). Residues 128–130, 246–247, A290, 305–309, and R331 contribute to the FMN site; these read RAS, QA, and KPIAT.

This sequence belongs to the chorismate synthase family. As to quaternary structure, homotetramer. FMNH2 serves as cofactor.

It catalyses the reaction 5-O-(1-carboxyvinyl)-3-phosphoshikimate = chorismate + phosphate. It participates in metabolic intermediate biosynthesis; chorismate biosynthesis; chorismate from D-erythrose 4-phosphate and phosphoenolpyruvate: step 7/7. Functionally, catalyzes the anti-1,4-elimination of the C-3 phosphate and the C-6 proR hydrogen from 5-enolpyruvylshikimate-3-phosphate (EPSP) to yield chorismate, which is the branch point compound that serves as the starting substrate for the three terminal pathways of aromatic amino acid biosynthesis. This reaction introduces a second double bond into the aromatic ring system. The chain is Chorismate synthase from Deinococcus geothermalis (strain DSM 11300 / CIP 105573 / AG-3a).